Here is a 165-residue protein sequence, read N- to C-terminus: uncharacterized protein (165 aa).

A helical membrane pass occupies residues 16-36 (ASISSILNFFFFYIMEYFVAV).

Belongs to the asfivirus F165R family.

The protein resides in the host membrane. This is an uncharacterized protein from African swine fever virus (isolate Tick/Malawi/Lil 20-1/1983) (ASFV).